The sequence spans 144 residues: Small ribosomal subunit protein uS11c (144 aa).

It belongs to the universal ribosomal protein uS11 family. As to quaternary structure, part of the 30S ribosomal subunit.

It localises to the plastid. It is found in the chloroplast. In Oenothera biennis (German evening primrose), this protein is Small ribosomal subunit protein uS11c.